Reading from the N-terminus, the 905-residue chain is Cadherin-2B (905 aa).

A signal peptide spans 1 to 28 (MCRKQPFLLPTLLGILAALMLQQGPVEA). Positions 29-160 (FGGSRLCKTG…NSNGLQRQKR (132 aa)) are excised as a propeptide. Cadherin domains are found at residues 161–268 (DWVI…RPEF), 269–383 (LHQI…PPEF), 384–498 (TAMT…NPYF), 499–604 (TPNP…DNAP), and 605–713 (YVYP…TTAP). Over 161–723 (DWVIPPINVP…IIGTGLGTGA (563 aa)) the chain is Extracellular. Glu171 serves as a coordination point for Ca(2+). Asn191 is a glycosylation site (N-linked (GlcNAc...) asparagine). Positions 227, 229, 260, 261, 262, 263, and 264 each coordinate Ca(2+). Asn274 is a glycosylation site (N-linked (GlcNAc...) asparagine). Ca(2+) contacts are provided by Asp294, Asp296, and Asn302. Asn326 carries an N-linked (GlcNAc...) asparagine glycan. Asp354 serves as a coordination point for Ca(2+). N-linked (GlcNAc...) asparagine glycans are attached at residues Asn403, Asn573, Asn623, Asn651, and Asn692. Residues 724–745 (IIAILLCIIILLTLVLMFVVWM) form a helical membrane-spanning segment. Topologically, residues 746 to 905 (KRRDKERQAK…LADMYGGSDD (160 aa)) are cytoplasmic. Disordered regions lie at residues 774–800 (EEGG…PDTI) and 862–883 (SGST…EQDY). Positions 775-784 (EGGGEEDQDY) are enriched in acidic residues. Positions 862–879 (SGSTAGSLSSLNSSSSGG) are enriched in low complexity.

In terms of assembly, homodimer (via extracellular region). Can also form heterodimers with other cadherins (via extracellular region). Dimerization occurs in trans, i.e. with a cadherin chain from another cell.

The protein resides in the cell membrane. Its subcellular location is the sarcolemma. It is found in the cell junction. It localises to the cell surface. The protein localises to the desmosome. The protein resides in the adherens junction. In terms of biological role, calcium-dependent cell adhesion protein; preferentially mediates homotypic cell-cell adhesion. Cadherins may thus contribute to the sorting of heterogeneous cell types, and thereby play an important role during embryonic development. Required for proper neurite branching. Required for pre- and postsynaptic organization. The chain is Cadherin-2B (cdh2-b) from Xenopus laevis (African clawed frog).